The following is a 111-amino-acid chain: T cell receptor beta variable 30 (111 aa).

Positions 1 to 18 (MLCSLLALLLGTFFGVRS) are cleaved as a signal peptide. The Ig-like domain occupies 19 to 111 (QTIHQWPATL…DSGFYLCAWS (93 aa)). Cys40 and Cys108 are disulfide-bonded. The N-linked (GlcNAc...) asparagine glycan is linked to Asn80.

As to quaternary structure, alpha-beta TR is a heterodimer composed of an alpha and beta chain; disulfide-linked. The alpha-beta TR is associated with the transmembrane signaling CD3 coreceptor proteins to form the TR-CD3 (TcR or TCR). The assembly of alpha-beta TR heterodimers with CD3 occurs in the endoplasmic reticulum where a single alpha-beta TR heterodimer associates with one CD3D-CD3E heterodimer, one CD3G-CD3E heterodimer and one CD247 homodimer forming a stable octameric structure. CD3D-CD3E and CD3G-CD3E heterodimers preferentially associate with TR alpha and TR beta chains, respectively. The association of the CD247 homodimer is the last step of TcR assembly in the endoplasmic reticulum and is required for transport to the cell surface.

It is found in the cell membrane. Its function is as follows. V region of the variable domain of T cell receptor (TR) beta chain that participates in the antigen recognition. Alpha-beta T cell receptors are antigen specific receptors which are essential to the immune response and are present on the cell surface of T lymphocytes. Recognize peptide-major histocompatibility (MH) (pMH) complexes that are displayed by antigen presenting cells (APC), a prerequisite for efficient T cell adaptive immunity against pathogens. Binding of alpha-beta TR to pMH complex initiates TR-CD3 clustering on the cell surface and intracellular activation of LCK that phosphorylates the ITAM motifs of CD3G, CD3D, CD3E and CD247 enabling the recruitment of ZAP70. In turn ZAP70 phosphorylates LAT, which recruits numerous signaling molecules to form the LAT signalosome. The LAT signalosome propagates signal branching to three major signaling pathways, the calcium, the mitogen-activated protein kinase (MAPK) kinase and the nuclear factor NF-kappa-B (NF-kB) pathways, leading to the mobilization of transcription factors that are critical for gene expression and essential for T cell growth and differentiation. The T cell repertoire is generated in the thymus, by V-(D)-J rearrangement. This repertoire is then shaped by intrathymic selection events to generate a peripheral T cell pool of self-MH restricted, non-autoaggressive T cells. Post-thymic interaction of alpha-beta TR with the pMH complexes shapes TR structural and functional avidity. The sequence is that of T cell receptor beta variable 30 from Homo sapiens (Human).